The primary structure comprises 267 residues: Ribosomal RNA small subunit methyltransferase A (267 aa).

S-adenosyl-L-methionine-binding residues include Asn-16, Leu-18, Gly-43, Glu-64, Asp-89, and Asn-110.

This sequence belongs to the class I-like SAM-binding methyltransferase superfamily. rRNA adenine N(6)-methyltransferase family. RsmA subfamily.

It localises to the cytoplasm. The enzyme catalyses adenosine(1518)/adenosine(1519) in 16S rRNA + 4 S-adenosyl-L-methionine = N(6)-dimethyladenosine(1518)/N(6)-dimethyladenosine(1519) in 16S rRNA + 4 S-adenosyl-L-homocysteine + 4 H(+). Specifically dimethylates two adjacent adenosines (A1518 and A1519) in the loop of a conserved hairpin near the 3'-end of 16S rRNA in the 30S particle. May play a critical role in biogenesis of 30S subunits. In Pseudomonas putida (strain ATCC 47054 / DSM 6125 / CFBP 8728 / NCIMB 11950 / KT2440), this protein is Ribosomal RNA small subunit methyltransferase A.